The following is a 404-amino-acid chain: Cysteine desulfurase IscS (404 aa).

Pyridoxal 5'-phosphate contacts are provided by residues 75 to 76 (AT), N155, Q183, and 203 to 205 (SSH). K206 bears the N6-(pyridoxal phosphate)lysine mark. A pyridoxal 5'-phosphate-binding site is contributed by T243. C328 (cysteine persulfide intermediate) is an active-site residue. C328 contacts [2Fe-2S] cluster.

The protein belongs to the class-V pyridoxal-phosphate-dependent aminotransferase family. NifS/IscS subfamily. As to quaternary structure, homodimer. Forms a heterotetramer with IscU, interacts with other sulfur acceptors. It depends on pyridoxal 5'-phosphate as a cofactor.

It localises to the cytoplasm. It catalyses the reaction (sulfur carrier)-H + L-cysteine = (sulfur carrier)-SH + L-alanine. Its pathway is cofactor biosynthesis; iron-sulfur cluster biosynthesis. Its function is as follows. Master enzyme that delivers sulfur to a number of partners involved in Fe-S cluster assembly, tRNA modification or cofactor biosynthesis. Catalyzes the removal of elemental sulfur atoms from cysteine to produce alanine. Functions as a sulfur delivery protein for Fe-S cluster synthesis onto IscU, an Fe-S scaffold assembly protein, as well as other S acceptor proteins. The polypeptide is Cysteine desulfurase IscS (Histophilus somni (strain 2336) (Haemophilus somnus)).